The following is a 461-amino-acid chain: L-seryl-tRNA(Sec) selenium transferase (461 aa).

Residue Lys294 is modified to N6-(pyridoxal phosphate)lysine.

It belongs to the SelA family. Requires pyridoxal 5'-phosphate as cofactor.

It localises to the cytoplasm. The enzyme catalyses L-seryl-tRNA(Sec) + selenophosphate + H(+) = L-selenocysteinyl-tRNA(Sec) + phosphate. The protein operates within aminoacyl-tRNA biosynthesis; selenocysteinyl-tRNA(Sec) biosynthesis; selenocysteinyl-tRNA(Sec) from L-seryl-tRNA(Sec) (bacterial route): step 1/1. Functionally, converts seryl-tRNA(Sec) to selenocysteinyl-tRNA(Sec) required for selenoprotein biosynthesis. The sequence is that of L-seryl-tRNA(Sec) selenium transferase from Haemophilus influenzae (strain PittEE).